The chain runs to 500 residues: MTIFDNYEVWFVIGSQHLYGPETLRQVTQHAEHVVNALNTEAKLPCKLVLKPLGTTPDEITAICRDANYDDRCAGLVVWLHTFSPAKMWINGLTMLNKPLLQFHTQFNAALPWDSIDMDFMNLNQTAHGGREFGFIGARMRQQHAVVTGHWQDKQAHERIGSWMRQAVSKQDTRHLKVCRFGDNMREVAVTDGDKVAAQIKFGFSVNTWAVGDLVQVVNSISDGDVNALVDEYESCYTMTPATQIHGEKRQNVLEAARIELGMKRFLEQGGFHAFTTTFEDLHGLKQLPGLAVQRLMQQGYGFAGEGDWKTAALLRIMKVMSTGLQGGTSFMEDYTYHFEKGNDLVLGSHMLEVCPSIAVEEKPILDVQHLGIGGKDDPARLIFNTQTGPAIVASLIDLGDRYRLLVNCIDTVKTPHSLLKLPVANALWKAQPDLPTASEAWILAGGAHHTVFSHALNLNDMRQFAEMHDIEITVIDNDTRLPAFKDALRWNEVYYGFRR.

Glu-306, Glu-333, His-350, and His-450 together coordinate Mn(2+).

The protein belongs to the arabinose isomerase family. As to quaternary structure, homohexamer. The cofactor is Mn(2+).

It catalyses the reaction beta-L-arabinopyranose = L-ribulose. The protein operates within carbohydrate degradation; L-arabinose degradation via L-ribulose; D-xylulose 5-phosphate from L-arabinose (bacterial route): step 1/3. In terms of biological role, catalyzes the conversion of L-arabinose to L-ribulose. The chain is L-arabinose isomerase from Shigella boydii serotype 18 (strain CDC 3083-94 / BS512).